The chain runs to 357 residues: Sulfate/thiosulfate import ATP-binding protein CysA (357 aa).

The 235-residue stretch at 3-237 folds into the ABC transporter domain; that stretch reads ITIQNLNKHF…PENAFVTEFL (235 aa). Position 35–42 (35–42) interacts with ATP; sequence GPSGCGKT.

This sequence belongs to the ABC transporter superfamily. Sulfate/tungstate importer (TC 3.A.1.6) family. In terms of assembly, the complex is composed of two ATP-binding proteins (CysA), two transmembrane proteins (CysT and CysW) and a solute-binding protein (CysP).

It localises to the cell inner membrane. The enzyme catalyses sulfate(out) + ATP + H2O = sulfate(in) + ADP + phosphate + H(+). The catalysed reaction is thiosulfate(out) + ATP + H2O = thiosulfate(in) + ADP + phosphate + H(+). In terms of biological role, part of the ABC transporter complex CysAWTP involved in sulfate/thiosulfate import. Responsible for energy coupling to the transport system. In Neisseria meningitidis serogroup B (strain ATCC BAA-335 / MC58), this protein is Sulfate/thiosulfate import ATP-binding protein CysA.